The sequence spans 684 residues: Homoaconitase, mitochondrial (684 aa).

Cys-337, Cys-397, and Cys-400 together coordinate [4Fe-4S] cluster.

It belongs to the aconitase/IPM isomerase family. Requires [4Fe-4S] cluster as cofactor.

The protein localises to the mitochondrion. It catalyses the reaction (2R,3S)-homoisocitrate = cis-homoaconitate + H2O. The protein operates within amino-acid biosynthesis; L-lysine biosynthesis via AAA pathway; L-alpha-aminoadipate from 2-oxoglutarate: step 3/5. Catalyzes the reversible hydration of cis-homoaconitate to (2R,3S)-homoisocitrate, a step in the alpha-aminoadipate pathway for lysine biosynthesis. The polypeptide is Homoaconitase, mitochondrial (LYS4) (Candida albicans (strain SC5314 / ATCC MYA-2876) (Yeast)).